We begin with the raw amino-acid sequence, 232 residues long: Proteasome subunit alpha (232 aa).

This sequence belongs to the peptidase T1A family. In terms of assembly, the 20S proteasome core is composed of 14 alpha and 14 beta subunits that assemble into four stacked heptameric rings, resulting in a barrel-shaped structure. The two inner rings, each composed of seven catalytic beta subunits, are sandwiched by two outer rings, each composed of seven alpha subunits. The catalytic chamber with the active sites is on the inside of the barrel. Has a gated structure, the ends of the cylinder being occluded by the N-termini of the alpha-subunits. Is capped by the proteasome-associated ATPase, ARC.

The protein resides in the cytoplasm. It participates in protein degradation; proteasomal Pup-dependent pathway. The formation of the proteasomal ATPase ARC-20S proteasome complex, likely via the docking of the C-termini of ARC into the intersubunit pockets in the alpha-rings, may trigger opening of the gate for substrate entry. Interconversion between the open-gate and close-gate conformations leads to a dynamic regulation of the 20S proteasome proteolysis activity. Functionally, component of the proteasome core, a large protease complex with broad specificity involved in protein degradation. This Acidimicrobium ferrooxidans (strain DSM 10331 / JCM 15462 / NBRC 103882 / ICP) protein is Proteasome subunit alpha.